The chain runs to 305 residues: Glycine--tRNA ligase alpha subunit (305 aa).

This sequence belongs to the class-II aminoacyl-tRNA synthetase family. As to quaternary structure, tetramer of two alpha and two beta subunits.

The protein resides in the cytoplasm. The catalysed reaction is tRNA(Gly) + glycine + ATP = glycyl-tRNA(Gly) + AMP + diphosphate. This chain is Glycine--tRNA ligase alpha subunit, found in Streptococcus pyogenes serotype M4 (strain MGAS10750).